A 488-amino-acid polypeptide reads, in one-letter code: BTB/POZ domain-containing protein 1 (488 aa).

Positions 1–19 (MASLGSAAAGEPATGAEAE) are enriched in low complexity. The segment at 1 to 42 (MASLGSAAAGEPATGAEAEPGPPAPPPPPPPPPAPSPSALGP) is disordered. A compositionally biased stretch (pro residues) spans 20–36 (PGPPAPPPPPPPPPAPS). A BTB domain is found at 75 to 151 (SDVRFVLGKG…LYSDEVQIGP (77 aa)). Arg-85 is modified (omega-N-methylarginine). The BACK domain maps to 190 to 290 (LTQARLFDEP…IRFPLMTIEE (101 aa)).

In terms of assembly, interacts (via C-terminus) with TOP1. Interacts with TRIM5 isoform Delta. Interacts with CUL3. As to expression, strongly expressed in heart and skeletal muscle. Weakly expressed in myoblast C2C12 cells, but strongly up-regulated upon their differentiation into myotubes.

It localises to the cytoplasm. It participates in protein modification; protein ubiquitination. In terms of biological role, probable substrate-specific adapter of an E3 ubiquitin-protein ligase complex which mediates the ubiquitination and subsequent proteasomal degradation of target proteins. Seems to regulate expression levels and/or subnuclear distribution of TOP1, via an unknown mechanism. May play a role in mesenchymal differentiation where it promotes myogenic differentiation and suppresses adipogenesis. The sequence is that of BTB/POZ domain-containing protein 1 (Btbd1) from Mus musculus (Mouse).